We begin with the raw amino-acid sequence, 407 residues long: MSIENKNTGVKKVVLAYSGGLDTSAIIPWLKENYDNCEIIAFCADVGQGEEELIGLTEKALASGASECHIVDLKEEFVKDYIYPTMATGAIYEGTYLLGTSMARPIIAKAQVEVARKVGADALCHGCTGKGNDQVRFEGCFAALAPDLKVIAPWREWTMQSREDLLAYLAERNIKTSASATKIYSRDANAFHISHEGGELEDPWNEPSKGVWTLTADPEDAPNQAEYVSLEVENGRVTKVNGEALTPYAALMKLNAIAAPHGVGRIDITENRLVGMKSRGCYETPGGTVMFAALRAIEELVLDKTSRNWREQVGAQMAHLVYDGRWFTPLCKSLLAASESLAESVNGEVVVKLYKGHAIAVKKRSPNSLYSEAFATFGEDQVYDQKHAEGFIRLYSLASRIRALNAK.

ATP contacts are provided by residues 16–24 (AYSGGLDTS) and Ala44. Residues Tyr96 and Ser101 each contribute to the L-citrulline site. Gly126 is an ATP binding site. L-aspartate contacts are provided by Thr128, Asn132, and Asp133. Asn132 contacts L-citrulline. 5 residues coordinate L-citrulline: Arg136, Ser185, Ser194, Glu270, and Tyr282.

This sequence belongs to the argininosuccinate synthase family. Type 1 subfamily. As to quaternary structure, homotetramer.

The protein resides in the cytoplasm. The catalysed reaction is L-citrulline + L-aspartate + ATP = 2-(N(omega)-L-arginino)succinate + AMP + diphosphate + H(+). Its pathway is amino-acid biosynthesis; L-arginine biosynthesis; L-arginine from L-ornithine and carbamoyl phosphate: step 2/3. The protein is Argininosuccinate synthase of Shewanella oneidensis (strain ATCC 700550 / JCM 31522 / CIP 106686 / LMG 19005 / NCIMB 14063 / MR-1).